The sequence spans 148 residues: Ribonuclease pancreatic (148 aa).

The first 25 residues, 1 to 25 (MGLEKSLILLPLLVLVFGWVQPSLG), serve as a signal peptide directing secretion. 2 residues coordinate substrate: Lys32 and Arg35. The active-site Proton acceptor is the His37. Intrachain disulfides connect Cys50/Cys108, Cys64/Cys119, Cys82/Cys134, and Cys89/Cys96. A glycan (N-linked (GlcNAc...) asparagine) is linked at Asn58. 65-69 (KPVNT) contributes to the substrate binding site. N-linked (GlcNAc...) asparagine glycosylation is present at Asn86. Substrate contacts are provided by Lys90 and Arg109. The active-site Proton donor is His143.

Belongs to the pancreatic ribonuclease family. In terms of assembly, monomer. Interacts with and forms tight 1:1 complexes with RNH1. Dimerization of two such complexes may occur. Interaction with RNH1 inhibits this protein. In terms of tissue distribution, pancreas.

It is found in the secreted. The catalysed reaction is an [RNA] containing cytidine + H2O = an [RNA]-3'-cytidine-3'-phosphate + a 5'-hydroxy-ribonucleotide-3'-[RNA].. It catalyses the reaction an [RNA] containing uridine + H2O = an [RNA]-3'-uridine-3'-phosphate + a 5'-hydroxy-ribonucleotide-3'-[RNA].. Endonuclease that catalyzes the cleavage of RNA on the 3' side of pyrimidine nucleotides. Acts on single-stranded and double-stranded RNA. This Myodes glareolus (Bank vole) protein is Ribonuclease pancreatic (RNASE1).